The chain runs to 2552 residues: Probable polyketide synthase 40 (2552 aa).

A Ketosynthase family 3 (KS3) domain is found at 13 to 443; the sequence is CNKVAIIGIG…GSNCCLIVSS (431 aa). Residues cysteine 179, histidine 320, and histidine 362 each act as for beta-ketoacyl synthase activity in the active site. Residues 629–662 are acyl/malonyl transferase; that stretch reads GIKPSIIVGHSLGEISSSYCSGMIDLDTFCYLIY. Serine 639 (for acyl/malonyl transferase activity) is an active-site residue. The interval 928-1063 is N-terminal hotdog fold; that stretch reads INHLGISNSN…ANFQLFSRGQ (136 aa). A PKS/mFAS DH domain is found at 928-1235; sequence INHLGISNSN…FKSTTKIKDS (308 aa). Histidine 962 serves as the catalytic Proton acceptor; for dehydratase activity. Positions 1087–1235 are C-terminal hotdog fold; the sequence is NLTKLSKQEL…FKSTTKIKDS (149 aa). Aspartate 1149 serves as the catalytic Proton donor; for dehydratase activity. A Carrier domain is found at 2467 to 2546; it reads DNVELTVDQL…SFIQLVKNSI (80 aa). Serine 2505 carries the O-(pantetheine 4'-phosphoryl)serine modification.

Pantetheine 4'-phosphate is required as a cofactor.

Its function is as follows. Probable polyketide synthase. The protein is Probable polyketide synthase 40 (pks40) of Dictyostelium discoideum (Social amoeba).